A 160-amino-acid polypeptide reads, in one-letter code: Cytosolic iron-sulfur assembly component 2A (160 aa).

Zn(2+) is bound by residues H89, H123, E150, and E153.

The protein belongs to the MIP18 family. In terms of assembly, monomer and homodimer. Component of the CIA complex. Interacts with CIAO1. Interacts with IREB2. Interacts with APAF1. Substantially enriched in macrophages.

It is found in the cytoplasm. Component of the cytosolic iron-sulfur protein assembly (CIA) complex, a multiprotein complex that mediates the incorporation of iron-sulfur cluster into extramitochondrial Fe/S proteins. As a CIA complex component and in collaboration with CIAO1 specifically matures ACO1 and stabilizes IREB2, connecting cytosolic iron-sulfur protein maturation with cellular iron regulation. May play a role in chromosome segregation through establishment of sister chromatid cohesion. May induce apoptosis in collaboration with APAF1. In Homo sapiens (Human), this protein is Cytosolic iron-sulfur assembly component 2A.